The sequence spans 217 residues: UPF0323 lipoprotein HPP12_0232 (217 aa).

The N-terminal stretch at Met1–Gly27 is a signal peptide. Cys28 carries N-palmitoyl cysteine lipidation. A lipid anchor (S-diacylglycerol cysteine) is attached at Cys28. Positions Gln160–Arg171 are enriched in polar residues. A disordered region spans residues Gln160 to Ser217. Low complexity predominate over residues Ser172 to Ser185. Positions Met186–Phe197 are enriched in polar residues. Residues Ser199 to Ser210 show a composition bias toward low complexity.

It belongs to the UPF0323 family.

The protein resides in the cell membrane. In Helicobacter pylori (strain P12), this protein is UPF0323 lipoprotein HPP12_0232.